A 346-amino-acid chain; its full sequence is Partitioning defective 6 homolog alpha (346 aa).

The interval methionine 1–glycine 116 is interaction with PRKCI and PRKCZ. A PB1 domain is found at isoleucine 15 to arginine 95. The interval arginine 126 to asparagine 253 is interaction with PARD3 and CDC42. The 18-residue stretch at isoleucine 133 to leucine 150 folds into the Pseudo-CRIB domain. Positions arginine 157–asparagine 250 constitute a PDZ domain. Residues arginine 257 to leucine 346 are disordered. Residues serine 278 and serine 345 each carry the phosphoserine modification.

It belongs to the PAR6 family. As to quaternary structure, interacts with MAP2K5. Interacts with PARD3. Interacts with GTP-bound forms of CDC42, RHOQ/TC10 and RAC1. Interacts with the N-terminal part of PRKCI and PRKCZ. Part of a complex with PARD3, CDC42 or RAC1 and PRKCI or PRKCZ. Part of a complex with LLGL1 and PRKCI. Interacts with human T-cell leukemia virus type I TAX protein. Interacts with PALS1 and CRB3. Interacts with TGFBR1; involved in TGF-beta induced epithelial to mesenchymal transition. Interacts with ECT2 ('Thr-359' phosphorylated form) and PRKCI. Interacts with DCTN1 and PCM1. In terms of processing, phosphorylated by the TGF-beta receptor. Ubiquitinated by the SCF(FBXO31) complex, leading to its proteasomal degradation. Expressed in pancreas, skeletal muscle, brain and heart. Weakly expressed in kidney and placenta.

Its subcellular location is the cytoplasm. The protein localises to the cell membrane. The protein resides in the cell projection. It localises to the ruffle. It is found in the cell junction. Its subcellular location is the tight junction. The protein localises to the cytoskeleton. The protein resides in the microtubule organizing center. It localises to the centrosome. It is found in the centriolar satellite. Its function is as follows. Adapter protein involved in asymmetrical cell division and cell polarization processes. Probably involved in the formation of epithelial tight junctions. Association with PARD3 may prevent the interaction of PARD3 with F11R/JAM1, thereby preventing tight junction assembly. The PARD6-PARD3 complex links GTP-bound Rho small GTPases to atypical protein kinase C proteins. Regulates centrosome organization and function. Essential for the centrosomal recruitment of key proteins that control centrosomal microtubule organization. In Homo sapiens (Human), this protein is Partitioning defective 6 homolog alpha (PARD6A).